Reading from the N-terminus, the 257-residue chain is Zinc transporter ZupT (257 aa).

Helical transmembrane passes span 5–25 (LILT…GVLG), 32–52 (LLAF…LMEM), 61–81 (GMSP…YLGL), 109–129 (AILL…ATFV), 137–157 (LGFG…LAVV), 171–191 (ILWA…AWLI), 195–215 (MISP…MVAL), and 236–256 (GVLC…TAGI). Asn120 and Glu123 together coordinate Fe(2+). Zn(2+) is bound by residues Glu123 and His148. Fe(2+) contacts are provided by Asn149, Glu152, and Glu181. Zn(2+) is bound at residue Glu152.

It belongs to the ZIP transporter (TC 2.A.5) family. ZupT subfamily.

The protein resides in the cell inner membrane. The enzyme catalyses Zn(2+)(in) = Zn(2+)(out). Mediates zinc uptake. May also transport other divalent cations. The chain is Zinc transporter ZupT from Shigella dysenteriae serotype 1 (strain Sd197).